A 511-amino-acid polypeptide reads, in one-letter code: Ribonuclease Y (511 aa).

A helical membrane pass occupies residues 2–22 (ITTVIIAIVCFAVGGGLSYML). The KH domain maps to 201–261 (SVTVFHIESD…VRREIARLAL (61 aa)). The 94-residue stretch at 327–420 (LLQHARETAN…VQVCDAISGA (94 aa)) folds into the HD domain.

Belongs to the RNase Y family.

Its subcellular location is the cell membrane. Functionally, endoribonuclease that initiates mRNA decay. The chain is Ribonuclease Y from Phocaeicola vulgatus (strain ATCC 8482 / DSM 1447 / JCM 5826 / CCUG 4940 / NBRC 14291 / NCTC 11154) (Bacteroides vulgatus).